The primary structure comprises 546 residues: CTP synthase (546 aa).

An amidoligase domain region spans residues 1-265 (MTKYVFVTGG…DEIVCHKLNI (265 aa)). Ser13 provides a ligand contact to CTP. Residue Ser13 participates in UTP binding. ATP-binding positions include 14–19 (SLGKGI) and Asp71. Mg(2+)-binding residues include Asp71 and Glu139. CTP contacts are provided by residues 146-148 (DIE), 186-191 (KTKPTQ), and Lys222. UTP contacts are provided by residues 186-191 (KTKPTQ) and Lys222. Residues 290–543 (KIAFVGKYVD…VKAALANQKA (254 aa)) enclose the Glutamine amidotransferase type-1 domain. Gly351 is a binding site for L-glutamine. The active-site Nucleophile; for glutamine hydrolysis is the Cys378. L-glutamine-binding positions include 379–382 (LGMQ), Glu402, and Arg469. Active-site residues include His516 and Glu518.

This sequence belongs to the CTP synthase family. As to quaternary structure, homotetramer.

It catalyses the reaction UTP + L-glutamine + ATP + H2O = CTP + L-glutamate + ADP + phosphate + 2 H(+). It carries out the reaction L-glutamine + H2O = L-glutamate + NH4(+). The catalysed reaction is UTP + NH4(+) + ATP = CTP + ADP + phosphate + 2 H(+). The protein operates within pyrimidine metabolism; CTP biosynthesis via de novo pathway; CTP from UDP: step 2/2. Its activity is regulated as follows. Allosterically activated by GTP, when glutamine is the substrate; GTP has no effect on the reaction when ammonia is the substrate. The allosteric effector GTP functions by stabilizing the protein conformation that binds the tetrahedral intermediate(s) formed during glutamine hydrolysis. Inhibited by the product CTP, via allosteric rather than competitive inhibition. Functionally, catalyzes the ATP-dependent amination of UTP to CTP with either L-glutamine or ammonia as the source of nitrogen. Regulates intracellular CTP levels through interactions with the four ribonucleotide triphosphates. The polypeptide is CTP synthase (Dechloromonas aromatica (strain RCB)).